A 344-amino-acid chain; its full sequence is tRNA(Ile)-lysidine synthase (344 aa).

Position 43–48 (43–48) interacts with ATP; it reads SGGADS.

It belongs to the tRNA(Ile)-lysidine synthase family.

The protein resides in the cytoplasm. The catalysed reaction is cytidine(34) in tRNA(Ile2) + L-lysine + ATP = lysidine(34) in tRNA(Ile2) + AMP + diphosphate + H(+). Functionally, ligates lysine onto the cytidine present at position 34 of the AUA codon-specific tRNA(Ile) that contains the anticodon CAU, in an ATP-dependent manner. Cytidine is converted to lysidine, thus changing the amino acid specificity of the tRNA from methionine to isoleucine. The polypeptide is tRNA(Ile)-lysidine synthase (Bordetella parapertussis (strain 12822 / ATCC BAA-587 / NCTC 13253)).